Consider the following 406-residue polypeptide: Calsequestrin-1 (406 aa).

Residues 1-34 (MRATDRMGARAVSKLRLALLFVLVLGTPRSGVQG) form the signal peptide. Residue Tyr-43 is modified to Phosphotyrosine. The residue at position 81 (Ser-81) is a Phosphoserine. Thr-124 carries the phosphothreonine modification. Ser-216 is subject to Phosphoserine. Asn-350 carries N-linked (GlcNAc...) asparagine glycosylation. The segment at 382–406 (EGEINTEDDDDDDDDDDDDDDDDDD) is disordered.

Belongs to the calsequestrin family. Monomer; increases in response to a depletion of intracellular calcium. Homodimer. Homotetramer and homopolymer. Can form linear homooligomers. Ca(2+) ions promote oligomerization. Interacts (via C-terminal end and preferentially with the monomeric form) with STIM1; this interaction increases in response to a depletion of intracellular calcium, decreases both STIM1 aggregation and clustering, interaction of STIM1 with ORAI1 and store-operated Ca(2+) entry (SOCE) activity. Interacts with ASPH and TRDN. N-glycosylated. Detected in skeletal muscle and in smooth muscle from vas deferens, aorta and stomach (at protein level).

It is found in the endoplasmic reticulum. The protein resides in the sarcoplasmic reticulum. The protein localises to the sarcoplasmic reticulum lumen. It localises to the sarcoplasmic reticulum membrane. Its subcellular location is the mitochondrion matrix. Calsequestrin is a high-capacity, moderate affinity, calcium-binding protein and thus acts as an internal calcium store in muscle. Calcium ions are bound by clusters of acidic residues at the protein surface, often at the interface between subunits. Can bind around 80 Ca(2+) ions. Regulates the release of lumenal Ca(2+) via the calcium release channel RYR1; this plays an important role in triggering muscle contraction. Negatively regulates store-operated Ca(2+) entry (SOCE) activity. The sequence is that of Calsequestrin-1 (Casq1) from Rattus norvegicus (Rat).